Reading from the N-terminus, the 338-residue chain is LIX1-like protein (338 aa).

The tract at residues 1 to 65 (METMRAQRLQ…LLLAGAPGLP (65 aa)) is disordered. A compositionally biased stretch (low complexity) spans 29–38 (TGAPTSAATP). The span at 39 to 56 (PAGPPPAPPPPAPPPPPL) shows a compositional bias: pro residues.

It belongs to the LIX1 family.

The chain is LIX1-like protein (Lix1l) from Rattus norvegicus (Rat).